The primary structure comprises 130 residues: YopE regulator (130 aa).

Its function is as follows. Positive regulator of YopE. The protein is YopE regulator (yerA) of Yersinia enterocolitica serotype O:8 / biotype 1B (strain NCTC 13174 / 8081).